Here is a 113-residue protein sequence, read N- to C-terminus: Gigasin-5 (113 aa).

As to expression, component of the organic matrix of calcified shell layers.

The protein is Gigasin-5 of Magallana gigas (Pacific oyster).